A 170-amino-acid chain; its full sequence is Adenine phosphoribosyltransferase (170 aa).

This sequence belongs to the purine/pyrimidine phosphoribosyltransferase family. In terms of assembly, homodimer.

It is found in the cytoplasm. The enzyme catalyses AMP + diphosphate = 5-phospho-alpha-D-ribose 1-diphosphate + adenine. It functions in the pathway purine metabolism; AMP biosynthesis via salvage pathway; AMP from adenine: step 1/1. Its function is as follows. Catalyzes a salvage reaction resulting in the formation of AMP, that is energically less costly than de novo synthesis. The polypeptide is Adenine phosphoribosyltransferase (Bacillus anthracis (strain A0248)).